The chain runs to 516 residues: 2-isopropylmalate synthase (516 aa).

The 262-residue stretch at 10-271 (IRIFDTTLRD…TTGIDTRELA (262 aa)) folds into the Pyruvate carboxyltransferase domain. Aspartate 19, histidine 205, histidine 207, and asparagine 241 together coordinate Mn(2+). Residues 396-516 (ELVSFRVEAG…REKASNRETP (121 aa)) form a regulatory domain region.

The protein belongs to the alpha-IPM synthase/homocitrate synthase family. LeuA type 1 subfamily. In terms of assembly, homodimer. Mn(2+) serves as cofactor.

The protein localises to the cytoplasm. It catalyses the reaction 3-methyl-2-oxobutanoate + acetyl-CoA + H2O = (2S)-2-isopropylmalate + CoA + H(+). The protein operates within amino-acid biosynthesis; L-leucine biosynthesis; L-leucine from 3-methyl-2-oxobutanoate: step 1/4. Functionally, catalyzes the condensation of the acetyl group of acetyl-CoA with 3-methyl-2-oxobutanoate (2-ketoisovalerate) to form 3-carboxy-3-hydroxy-4-methylpentanoate (2-isopropylmalate). The polypeptide is 2-isopropylmalate synthase (Acidimicrobium ferrooxidans (strain DSM 10331 / JCM 15462 / NBRC 103882 / ICP)).